The following is a 223-amino-acid chain: Pre-hexon-linking protein VIII (223 aa).

Thr64 carries the phosphothreonine; by host modification. Residues 112–153 (GALAPRDLYALTLRGRGIQLNEDLPLSASTLRPDGIFQLGGG) constitute a propeptide that is removed on maturation. At Ser170 the chain carries Phosphoserine; by host.

This sequence belongs to the adenoviridae hexon-linking protein family. As to quaternary structure, interacts with the peripentonal hexons as well as the hexons in the facets. Part of a complex composed of the core-capsid bridging protein, the endosome lysis protein VI and the hexon-linking protein VIII; these interactions bridge the virus core to the capsid. Cleaved by the viral protease during virion maturation. May cause the middle segment to be shed from the capsid.

Its subcellular location is the virion. The protein localises to the host nucleus. Functionally, structural component of the virion that acts as a cement protein on the capsid interior and which glue the peripentonal hexons and group-of-nine hexons together. This is Pre-hexon-linking protein VIII from Porcine adenovirus A serotype 3 (PAdV-3).